The primary structure comprises 319 residues: Chromoplast-specific carotenoid-associated protein C1, chromoplastic (319 aa).

A chromoplast-targeting transit peptide spans 1–55 (MTSIAFWNAFTVNPFPAAARRSPPPLTPFTSGALSPARKPRILEISHPRTLPSFR).

This sequence belongs to the PAP/fibrillin family. Expressed in flower buds and floral lip tissues. Not detected in roots and leaves. Specifically expressed in conical papillate cells of adaxial epidermis of lip tissues.

It is found in the plastid. Its subcellular location is the chromoplast. May be involved in carotenoid sequestration within chromoplasts. This chain is Chromoplast-specific carotenoid-associated protein C1, chromoplastic (CHRC1), found in Oncidium hybrid cultivar (Orchid).